The primary structure comprises 123 residues: Fluoride-specific ion channel FluC (123 aa).

A run of 4 helical transmembrane segments spans residues 6–26 (VALV…LSGV), 38–58 (LLVN…IFWG), 68–88 (FLGT…YETF), and 100–120 (LLNI…GFVL). Na(+) is bound by residues Gly-75 and Ser-78.

This sequence belongs to the fluoride channel Fluc/FEX (TC 1.A.43) family.

The protein localises to the cell membrane. The catalysed reaction is fluoride(in) = fluoride(out). With respect to regulation, na(+) is not transported, but it plays an essential structural role and its presence is essential for fluoride channel function. Functionally, fluoride-specific ion channel. Important for reducing fluoride concentration in the cell, thus reducing its toxicity. The polypeptide is Fluoride-specific ion channel FluC (Pyrococcus furiosus (strain ATCC 43587 / DSM 3638 / JCM 8422 / Vc1)).